The following is a 100-amino-acid chain: UPF0251 protein VV2_0946 (100 aa).

It belongs to the UPF0251 family.

This is UPF0251 protein VV2_0946 from Vibrio vulnificus (strain CMCP6).